A 307-amino-acid chain; its full sequence is MKLELIWVIYKSGSKSAKEEALLCSRNIESLGIKVITAESGPLLNTCNNILNPNKQIPTLVIVLGGDGTVLGAARHLAMYEVPILSFNVGGNLGFLTHDRQLLKDESLWSRIQEDQFAIESRMMLKGRVESYLDTNDVGKKENFFWALNDIYFRSCSEDISPTCTLELKIDDEDVDIYRGDGVILSTPTGSTAYSMATGGPILHPGIEAIIVSAICPMSLSSRPIVVPAGSRLIIKPVGNKNQRVNIWQDGVSSALMQKGEQCVIEKARNHAQMLILEQSPSYFRTLTQKLHWAGSLVDNQNKMAPK.

The Proton acceptor role is filled by aspartate 67. NAD(+) contacts are provided by residues 67-68 (DG), 149-150 (ND), arginine 179, and aspartate 181.

This sequence belongs to the NAD kinase family. It depends on a divalent metal cation as a cofactor.

The protein resides in the cytoplasm. The enzyme catalyses NAD(+) + ATP = ADP + NADP(+) + H(+). Functionally, involved in the regulation of the intracellular balance of NAD and NADP, and is a key enzyme in the biosynthesis of NADP. Catalyzes specifically the phosphorylation on 2'-hydroxyl of the adenosine moiety of NAD to yield NADP. The sequence is that of NAD kinase 1 from Prochlorococcus marinus (strain SARG / CCMP1375 / SS120).